Reading from the N-terminus, the 552-residue chain is Membrane protein insertase YidC (552 aa).

Helical transmembrane passes span 7-24 (VLWVIFFMSAVMLYDNWQ), 364-384 (WGWAIVLLTVLIKAVFFPLSA), 434-454 (LPVVIQIPVFISLYWVLLASV), 473-493 (PFFILPVLMAVSMFVQTSLNP), and 508-528 (PIAFSVMFFFFPAGLVLYYVV).

The protein belongs to the OXA1/ALB3/YidC family. Type 1 subfamily. Interacts with the Sec translocase complex via SecD. Specifically interacts with transmembrane segments of nascent integral membrane proteins during membrane integration.

The protein resides in the cell inner membrane. In terms of biological role, required for the insertion and/or proper folding and/or complex formation of integral membrane proteins into the membrane. Involved in integration of membrane proteins that insert both dependently and independently of the Sec translocase complex, as well as at least some lipoproteins. Aids folding of multispanning membrane proteins. This is Membrane protein insertase YidC from Burkholderia cenocepacia (strain HI2424).